A 134-amino-acid polypeptide reads, in one-letter code: Sec-independent protein translocase protein TatB (134 aa).

Residues Phe2–Gly22 form a helical membrane-spanning segment. Residues Ala90 to Lys134 form a disordered region. Positions Ser123 to Lys134 are enriched in polar residues.

Belongs to the TatB family. The Tat system comprises two distinct complexes: a TatABC complex, containing multiple copies of TatA, TatB and TatC subunits, and a separate TatA complex, containing only TatA subunits. Substrates initially bind to the TatABC complex, which probably triggers association of the separate TatA complex to form the active translocon.

It localises to the cell inner membrane. Part of the twin-arginine translocation (Tat) system that transports large folded proteins containing a characteristic twin-arginine motif in their signal peptide across membranes. Together with TatC, TatB is part of a receptor directly interacting with Tat signal peptides. TatB may form an oligomeric binding site that transiently accommodates folded Tat precursor proteins before their translocation. This chain is Sec-independent protein translocase protein TatB, found in Shewanella frigidimarina (strain NCIMB 400).